A 485-amino-acid chain; its full sequence is AP2-like ethylene-responsive transcription factor TOE2 (485 aa).

The span at 124–135 (GDFIGSGSGGGD) shows a compositional bias: gly residues. Residues 124-161 (GDFIGSGSGGGDASRVMQPPSQPVKKSRRGPRSKSSQY) form a disordered region. The AP2/ERF DNA-binding region spans 160 to 216 (QYRGVTFYRRTGRWESHIWDCGKQVYLGGFDTAHAAARAYDRAAVKFRGLEADINFV).

This sequence belongs to the AP2/ERF transcription factor family. AP2 subfamily.

The protein resides in the nucleus. Functionally, probably acts as a transcriptional activator. Binds to the GCC-box pathogenesis-related promoter element. May be involved in the regulation of gene expression by stress factors and by components of stress signal transduction pathways. Regulates negatively the transition to flowering time and confers flowering time delay. The sequence is that of AP2-like ethylene-responsive transcription factor TOE2 (TOE2) from Arabidopsis thaliana (Mouse-ear cress).